The primary structure comprises 198 residues: MTINLILLSLLAYVIGSIPSGLWIGKIFYKKDIREFGSGNLGATNSFRVLGIKAGSIVTVMDILKGTVATLLPFFFQLNVDHHFWLLTGAFAIIGHSFPLFAGFRGGKAVATSAGVILAYAPLLFVAALVVFLVTLKLSKYVSLSSMIGALAALIISLFMGDWILIVLVACIALFVIWRHRANITRIRNGEEPKIKWM.

The next 5 helical transmembrane spans lie at 5–25 (LILLSLLAYVIGSIPSGLWIG), 56–76 (SIVTVMDILKGTVATLLPFFF), 84–104 (FWLLTGAFAIIGHSFPLFAGF), 114–134 (AGVILAYAPLLFVAALVVFLV), and 158–178 (LFMGDWILIVLVACIALFVIW).

Belongs to the PlsY family. In terms of assembly, probably interacts with PlsX.

Its subcellular location is the cell membrane. The catalysed reaction is an acyl phosphate + sn-glycerol 3-phosphate = a 1-acyl-sn-glycero-3-phosphate + phosphate. The protein operates within lipid metabolism; phospholipid metabolism. Its function is as follows. Catalyzes the transfer of an acyl group from acyl-phosphate (acyl-PO(4)) to glycerol-3-phosphate (G3P) to form lysophosphatidic acid (LPA). This enzyme utilizes acyl-phosphate as fatty acyl donor, but not acyl-CoA or acyl-ACP. This Listeria monocytogenes serovar 1/2a (strain ATCC BAA-679 / EGD-e) protein is Glycerol-3-phosphate acyltransferase.